The chain runs to 353 residues: Glycerol-3-phosphate dehydrogenase [NAD(+)], cytoplasmic (353 aa).

A Blocked amino end (Ala) modification is found at alanine 2. NAD(+) is bound by residues glycine 11–glycine 16, phenylalanine 98, lysine 121, and alanine 155. Lysine 121 is a binding site for substrate. The Proton acceptor role is filled by lysine 206. NAD(+) contacts are provided by arginine 270 and glutamine 299. Residue arginine 270 to asparagine 271 coordinates substrate.

It belongs to the NAD-dependent glycerol-3-phosphate dehydrogenase family. In terms of assembly, homodimer.

The protein localises to the cytoplasm. The catalysed reaction is sn-glycerol 3-phosphate + NAD(+) = dihydroxyacetone phosphate + NADH + H(+). It participates in phospholipid metabolism; alpha-glycerophosphate cycle. This is Glycerol-3-phosphate dehydrogenase [NAD(+)], cytoplasmic from Drosophila virilis (Fruit fly).